A 396-amino-acid chain; its full sequence is 1-deoxy-D-xylulose 5-phosphate reductoisomerase (396 aa).

NADPH-binding residues include threonine 15, glycine 16, serine 17, isoleucine 18, glycine 41, and asparagine 130. Lysine 131 is a binding site for 1-deoxy-D-xylulose 5-phosphate. Residue glutamate 132 coordinates NADPH. Aspartate 155 provides a ligand contact to Mn(2+). 4 residues coordinate 1-deoxy-D-xylulose 5-phosphate: serine 156, glutamate 157, serine 181, and histidine 204. Glutamate 157 provides a ligand contact to Mn(2+). Residue glycine 210 participates in NADPH binding. Residues serine 217, asparagine 222, lysine 223, and glutamate 226 each contribute to the 1-deoxy-D-xylulose 5-phosphate site. Glutamate 226 is a Mn(2+) binding site.

The protein belongs to the DXR family. Requires Mg(2+) as cofactor. Mn(2+) is required as a cofactor.

The enzyme catalyses 2-C-methyl-D-erythritol 4-phosphate + NADP(+) = 1-deoxy-D-xylulose 5-phosphate + NADPH + H(+). Its pathway is isoprenoid biosynthesis; isopentenyl diphosphate biosynthesis via DXP pathway; isopentenyl diphosphate from 1-deoxy-D-xylulose 5-phosphate: step 1/6. Catalyzes the NADPH-dependent rearrangement and reduction of 1-deoxy-D-xylulose-5-phosphate (DXP) to 2-C-methyl-D-erythritol 4-phosphate (MEP). The protein is 1-deoxy-D-xylulose 5-phosphate reductoisomerase of Bifidobacterium longum (strain NCC 2705).